Reading from the N-terminus, the 444-residue chain is F-box/FBD/LRR-repeat protein At5g53840 (444 aa).

Positions 17–63 (EERLSQLPDHLICVILSHLSTKDAVRTSILSTRWRNLWQLVPVLDFD) constitute an F-box domain. LRR repeat units follow at residues 103 to 123 (YYLT…IDIS), 124 to 150 (VFTC…KLSR), 151 to 171 (VTMV…DLDF), 172 to 197 (VNFT…TIVK), 199 to 224 (SEDN…RFDR), 226 to 252 (NGLV…EFIN), 273 to 299 (NRSM…TIKD), 300 to 321 (IFHY…LSAV), 322 to 347 (CSIS…SLKL), 369 to 396 (VSSL…YFLE), and 398 to 423 (STIL…HIRQ). Residues 356-408 (EEVMSSTVPPPCLVSSLKFVKLESQLLGCGTELKVARYFLENSTILEKLTLKI) form the FBD domain.

This is F-box/FBD/LRR-repeat protein At5g53840 from Arabidopsis thaliana (Mouse-ear cress).